Consider the following 184-residue polypeptide: Holliday junction branch migration complex subunit RuvA (184 aa).

Residues 1–62 (MIVGLVGEVL…EDSESLYGFV (62 aa)) form a domain I region. The tract at residues 63–134 (DINEKKMFDR…ELGEFDISES (72 aa)) is domain II. Residues 134–135 (SN) form a flexible linker region. Residues 136–184 (VTSSAFQEASMALQSLGFKKEQIQKALQECTATDTASLVKEALKKIQKL) form a domain III region.

It belongs to the RuvA family. Homotetramer. Forms an RuvA(8)-RuvB(12)-Holliday junction (HJ) complex. HJ DNA is sandwiched between 2 RuvA tetramers; dsDNA enters through RuvA and exits via RuvB. An RuvB hexamer assembles on each DNA strand where it exits the tetramer. Each RuvB hexamer is contacted by two RuvA subunits (via domain III) on 2 adjacent RuvB subunits; this complex drives branch migration. In the full resolvosome a probable DNA-RuvA(4)-RuvB(12)-RuvC(2) complex forms which resolves the HJ.

It localises to the cytoplasm. In terms of biological role, the RuvA-RuvB-RuvC complex processes Holliday junction (HJ) DNA during genetic recombination and DNA repair, while the RuvA-RuvB complex plays an important role in the rescue of blocked DNA replication forks via replication fork reversal (RFR). RuvA specifically binds to HJ cruciform DNA, conferring on it an open structure. The RuvB hexamer acts as an ATP-dependent pump, pulling dsDNA into and through the RuvAB complex. HJ branch migration allows RuvC to scan DNA until it finds its consensus sequence, where it cleaves and resolves the cruciform DNA. This chain is Holliday junction branch migration complex subunit RuvA, found in Nitratiruptor sp. (strain SB155-2).